A 1468-amino-acid chain; its full sequence is Neuropathy target esterase sws (1468 aa).

Topologically, residues 1–34 (MDVLEMLRASASGSYNTIFSDAWCQYVSKQITAT) are lumenal. The helical transmembrane segment at 35-55 (VYMYCALVMMSLLFIAWFLYF) threads the bilayer. Topologically, residues 56 to 1468 (KRMARLRLRD…RSSPNNETKN (1413 aa)) are cytoplasmic. 174 to 301 (IFGHFEKPVF…IRVIQVIMIR (128 aa)) serves as a coordination point for a nucleoside 3',5'-cyclic phosphate. Composition is skewed to polar residues over residues 332 to 348 (TMSG…SRQA) and 357 to 366 (NQLNLMQSAA). Residues 332-411 (TMSGPINSQT…DGSFHGTTNL (80 aa)) are disordered. Residues Ser-442 and Ser-451 each carry the phosphoserine modification. Residues 480–607 (ELGL…VVRR) and 596–723 (IVLD…LSHR) contribute to the a nucleoside 3',5'-cyclic phosphate site. One can recognise a PNPLA domain in the interval 950 to 1116 (LVLGGGGARG…VNNLPGHLWR (167 aa)). The short motif at 954 to 959 (GGGARG) is the GXGXXG element. Positions 981-985 (GVSIG) match the GXSXG motif. The active-site Nucleophile is the Ser-983. Residue Asp-1103 is the Proton acceptor of the active site. A DGA/G motif is present at residues 1103–1105 (DGG). Phosphoserine is present on Ser-1197. Positions 1368-1468 (ERKMDKSTQS…RSSPNNETKN (101 aa)) are disordered. Low complexity predominate over residues 1374–1383 (STQSSPPTSS). A compositionally biased stretch (basic and acidic residues) spans 1385–1395 (TDMRGKEEAKH). Over residues 1419–1441 (TQTGQEQELQQQQKLQQLQQDQG) the composition is skewed to low complexity. Residues 1446–1459 (QLVDKDKEEDKENR) show a composition bias toward basic and acidic residues.

Belongs to the NTE family. Interacts with Pka-C3; interaction inhibits the catalytic function of Pka-C3 and the esterase activity of sws.

Its subcellular location is the endoplasmic reticulum membrane. The catalysed reaction is a 1-acyl-sn-glycero-3-phosphocholine + H2O = sn-glycerol 3-phosphocholine + a fatty acid + H(+). In terms of biological role, phospholipase B that deacylates intracellular phosphatidylcholine (PtdCho), generating glycerophosphocholine (GroPtdCho). This deacylation occurs at both sn-2 and sn-1 positions of PtdCho. Its specific chemical modification by certain organophosphorus (OP) compounds leads to distal axonopathy. Plays a role in the signaling mechanism between neurons and glia that regulates glia wrapping during development of the adult brain. Essential for membrane lipid homeostasis and cell survival in both neurons and glia of the adult brain. This chain is Neuropathy target esterase sws, found in Drosophila sechellia (Fruit fly).